The sequence spans 646 residues: Long-chain fatty acid transport protein 1 (646 aa).

Residues 1–13 (MRAPGAGSASVAS) lie on the Extracellular side of the membrane. The chain crosses the membrane as a helical span at residues 14-34 (LVLLWLLGLPWTWSTAAALGV). The Cytoplasmic segment spans residues 35–646 (YVGGGGWRFL…TRICSGAFAL (612 aa)). A sufficient for oligomerization region spans residues 191 to 475 (EMSGELGKSL…YISESATSKK (285 aa)). 246 to 257 (YIYTSGTTGLPK) is an AMP binding site.

The protein belongs to the ATP-dependent AMP-binding enzyme family. Self-associates. May function as a homodimer. Interacts with EPRS1; mediates the translocation of SLC27A1 from the cytoplasm to the plasma membrane thereby increasing the uptake of long-chain fatty acids. Interacts with DGAT2 and this interaction is enhanced in the presence of ZFYVE1.

The protein resides in the cell membrane. It is found in the endomembrane system. The protein localises to the cytoplasm. It catalyses the reaction a fatty acid(in) = a fatty acid(out). It carries out the reaction (9Z)-octadecenoate(out) = (9Z)-octadecenoate(in). The catalysed reaction is hexadecanoate(out) = hexadecanoate(in). The enzyme catalyses (5Z,8Z,11Z,14Z)-eicosatetraenoate(out) = (5Z,8Z,11Z,14Z)-eicosatetraenoate(in). It catalyses the reaction (9Z,12Z)-octadecadienoate(out) = (9Z,12Z)-octadecadienoate(in). It carries out the reaction a long-chain fatty acid + ATP + CoA = a long-chain fatty acyl-CoA + AMP + diphosphate. The catalysed reaction is (5Z,8Z,11Z,14Z)-eicosatetraenoate + ATP + CoA = (5Z,8Z,11Z,14Z)-eicosatetraenoyl-CoA + AMP + diphosphate. The enzyme catalyses a very long-chain fatty acid + ATP + CoA = a very long-chain fatty acyl-CoA + AMP + diphosphate. It catalyses the reaction tetracosanoate + ATP + CoA = tetracosanoyl-CoA + AMP + diphosphate. Inhibited by Triacsin C. In terms of biological role, mediates the import of long-chain fatty acids (LCFA) into the cell by facilitating their transport at the plasma membrane. Also functions as an acyl-CoA ligase catalyzing the ATP-dependent formation of fatty acyl-CoA using LCFA and very-long-chain fatty acids (VLCFA) as substrates, which prevents fatty acid efflux from cells and might drive more fatty acid uptake. May act directly as a bona fide transporter, or alternatively, in a cytoplasmic or membrane-associated multimeric protein complex to trap and draw fatty acids towards accumulation. Plays a pivotal role in regulating available LCFA substrates from exogenous sources in tissues undergoing high levels of beta-oxidation or triglyceride synthesis. May be involved in regulation of cholesterol metabolism. Probably involved in fatty acid transport across the blood barrier. In Bos taurus (Bovine), this protein is Long-chain fatty acid transport protein 1.